A 98-amino-acid chain; its full sequence is RNA-binding protein Hfq (98 aa).

Residues 11–71 enclose the Sm domain; the sequence is DVFLNHVRRS…ISTVMPATPV (61 aa).

This sequence belongs to the Hfq family. As to quaternary structure, homohexamer.

RNA chaperone that binds small regulatory RNA (sRNAs) and mRNAs to facilitate mRNA translational regulation in response to envelope stress, environmental stress and changes in metabolite concentrations. Also binds with high specificity to tRNAs. The polypeptide is RNA-binding protein Hfq (Gluconacetobacter diazotrophicus (strain ATCC 49037 / DSM 5601 / CCUG 37298 / CIP 103539 / LMG 7603 / PAl5)).